A 715-amino-acid polypeptide reads, in one-letter code: MRAPSARALLLIPRRGPAVRAWAPAVSSRIWLASEWTPLVRAWTSLIHKPGSGLRFPAPLSGLPGGVGQWATSSGARRCWVLAGPRAAHPLFARLQGAAATGVRDLGNDSQRRPAATGRSEVWKLLGLVRPERGRLSAAVGFLAVSSVITMSAPFFLGRIIDVIYTNPSEGYGDSLTRLCAVLTCVFLCGAAANGIRVYLMQSSGQSIVNRLRTSLFSSILRQEVAFFDKTRTGELINRLSSDTALLGRSVTENLSDGLRAGAQASVGVGMMFFVSPSLATFVLSVVPPISVLAVIYGRYLRKLSKATQDSLAEATQLAEERIGNIRTIRAFGKEMTEVEKYTGRVDQLLQLAQKEALARAGFFGAAGLSGNLIVLSVLYKGGLLMGSAHMTVGELSSFLMYAFWVGLSIGGLSSFYSELMKGLGAGGRLWELLERQPRLPFNEGMVLDEKTFQGALEFRNVHFTYPARPEVSVFQDFSLSIPSGSVTALVGPSGSGKSTVVSLLLRLYDPNSGTVSLDGHDIRQLNPVWLRSKIGTVSQEPVLFSCSVAENIAYGADNLSSVTAQQVERAAEVANAAEFIRSFPQGFDTVVGEKGILLSGGQKQRIAIARALLKNPKILLLDEATSALDAENEHLVQEALDRLMEGRTVLIIAHRLSTIKNANFVAVLDHGKICEHGTHEELLLKPNGLYRKLMNKQSFLSYNGAEQFLEPARA.

The transit peptide at 1–82 (MRAPSARALL…SSGARRCWVL (82 aa)) directs the protein to the mitochondrion. Residues 83–133 (AGPRAAHPLFARLQGAAATGVRDLGNDSQRRPAATGRSEVWKLLGLVRPER) are Mitochondrial matrix-facing. Residues 134 to 157 (GRLSAAVGFLAVSSVITMSAPFFL) traverse the membrane as a helical segment. Residues 136–422 (LSAAVGFLAV…LSSFYSELMK (287 aa)) form the ABC transmembrane type-1 domain. Over 158-178 (GRIIDVIYTNPSEGYGDSLTR) the chain is Mitochondrial intermembrane. Residues 179–201 (LCAVLTCVFLCGAAANGIRVYLM) form a helical membrane-spanning segment. Topologically, residues 202–252 (QSSGQSIVNRLRTSLFSSILRQEVAFFDKTRTGELINRLSSDTALLGRSVT) are mitochondrial matrix. Lys-230 carries the N6-acetyllysine modification. The helical transmembrane segment at 253–275 (ENLSDGLRAGAQASVGVGMMFFV) threads the bilayer. Residues 276–278 (SPS) are Mitochondrial intermembrane-facing. The helical transmembrane segment at 279–298 (LATFVLSVVPPISVLAVIYG) threads the bilayer. Over 299 to 357 (RYLRKLSKATQDSLAEATQLAEERIGNIRTIRAFGKEMTEVEKYTGRVDQLLQLAQKEA) the chain is Mitochondrial matrix. The helical transmembrane segment at 358–381 (LARAGFFGAAGLSGNLIVLSVLYK) threads the bilayer. Topologically, residues 382–395 (GGLLMGSAHMTVGE) are mitochondrial intermembrane. The helical transmembrane segment at 396–417 (LSSFLMYAFWVGLSIGGLSSFY) threads the bilayer. Over 418 to 715 (SELMKGLGAG…AEQFLEPARA (298 aa)) the chain is Mitochondrial matrix. The region spanning 457–696 (LEFRNVHFTY…PNGLYRKLMN (240 aa)) is the ABC transporter domain. Residues Gly-495, Gly-497, Lys-498, Ser-499, and Thr-500 each contribute to the ATP site. Ser-499 contributes to the Mg(2+) binding site. The residue at position 547 (Cys-547) is an S-glutathionyl cysteine. Mg(2+) is bound at residue Asp-623.

This sequence belongs to the ABC transporter superfamily. ABCB family. Mitochondrial peptide exporter (TC 3.A.1.212) subfamily. In terms of assembly, homodimer or homooligomer. Interacts with PAAT; this interaction regulates ABCB10. Interacts with SLC25A37; this interaction stabilizes SLC25A37 and enhances the function of SLC25A37 to import mitochondrial iron during erythroid differentiation. Interacts with FECH; this interaction may allow the formation of the oligomeric complex with SLC25A37. Forms a complex with ABCB7 and FECH, where a dimeric FECH bridges ABCB7 and ABCB10 homodimers; this complex may be required for cellular iron homeostasis, mitochondrial function and heme biosynthesis. In terms of tissue distribution, expressed at particularly high levels in fetal liver, and erythroid tissues of embryos and adults. Found also in adult bone marrow, liver and kidney, and at lower levels in heart, brain and spleen.

The protein localises to the mitochondrion inner membrane. It carries out the reaction biliverdin IXalpha(in) + ATP + H2O = biliverdin IXalpha(out) + ADP + phosphate + H(+). Oxidized glutathione (GSSG) stimulates ATP hydrolysis without affecting ATP binding, whereas reduced glutathione (GSH) inhibits ATP binding and hydrolysis. ATP-dependent transporter located in the mitochondrial inner membrane that catalyzes the export of biliverdin from the mitochondrial matrix, and plays a crucial role in hemoglobin synthesis and antioxidative stress. Participates in the early step of the heme biosynthetic process during insertion of iron into protoporphyrin IX (PPIX). Involved in the stabilization of the iron transporter mitoferrin-1/SLC25A37. In addition may be involved in mitochondrial unfolded protein response (UPRmt) signaling pathway, although ABCB10 probably does not participate in peptide export from mitochondria. This is ATP-binding cassette sub-family B member 10, mitochondrial from Mus musculus (Mouse).